The sequence spans 815 residues: Tubulin polyglutamylase TTLL13 (815 aa).

Residues 85 to 430 enclose the TTL domain; sequence RRSLAINLTN…RGCDKRKVME (346 aa). Residues Lys-202, 208-209, 230-233, and 243-245 contribute to the ATP site; these read QG, QQYI, and KFD. Gln-208 serves as a coordination point for a protein. Arg-269 provides a ligand contact to L-glutamate. 291–292 lines the ATP pocket; that stretch reads TN. L-glutamate contacts are provided by Tyr-293 and Lys-311. The Mg(2+) site is built by Asp-376, Glu-389, and Asn-391. The segment at 401–482 is c-MTBD region; sequence CLDQEVKDAL…LGKYRRIYPG (82 aa). Residue Lys-407 participates in L-glutamate binding. Residues 504 to 528 are a coiled coil; that stretch reads ASKAREECARQQLEEIRLKQEQQET. The tract at residues 520-556 is disordered; sequence RLKQEQQETSGTKRQKARDQNQGESAGEKSRPRAGLQ. Residues 536–550 are compositionally biased toward basic and acidic residues; sequence ARDQNQGESAGEKSR.

This sequence belongs to the tubulin--tyrosine ligase family. Mg(2+) is required as a cofactor.

The enzyme catalyses (L-glutamyl)(n)-gamma-L-glutamyl-L-glutamyl-[protein] + L-glutamate + ATP = (L-glutamyl)(n+1)-gamma-L-glutamyl-L-glutamyl-[protein] + ADP + phosphate + H(+). In terms of biological role, polyglutamylase which modifies tubulin, generating polyglutamate side chains of variable lengths on the gamma-carboxyl group of specific glutamate residues within the C-terminal tail of tubulin. Mediates ATP-dependent polyglutamate side-chain elongation of the polyglutamylation reaction but not the initiation step. Preferentially modifies the alpha-tubulin tail over a beta-tail. The chain is Tubulin polyglutamylase TTLL13 from Homo sapiens (Human).